A 469-amino-acid polypeptide reads, in one-letter code: Sulfate adenylyltransferase subunit 1 (469 aa).

The region spanning 22–224 (KDLMRFITCG…NMTWYPGSPL (203 aa)) is the tr-type G domain. Positions 31–38 (GSVDDGKS) are G1. 31 to 38 (GSVDDGKS) contributes to the GTP binding site. Positions 89–93 (GITID) are G2. The tract at residues 110–113 (DTPG) is G3. Residues 110 to 114 (DTPGH) and 165 to 168 (NKMD) contribute to the GTP site. The tract at residues 165–168 (NKMD) is G4. A G5 region spans residues 202–204 (SAL).

The protein belongs to the TRAFAC class translation factor GTPase superfamily. Classic translation factor GTPase family. CysN/NodQ subfamily. As to quaternary structure, heterodimer composed of CysD, the smaller subunit, and CysN.

The enzyme catalyses sulfate + ATP + H(+) = adenosine 5'-phosphosulfate + diphosphate. It functions in the pathway sulfur metabolism; hydrogen sulfide biosynthesis; sulfite from sulfate: step 1/3. With CysD forms the ATP sulfurylase (ATPS) that catalyzes the adenylation of sulfate producing adenosine 5'-phosphosulfate (APS) and diphosphate, the first enzymatic step in sulfur assimilation pathway. APS synthesis involves the formation of a high-energy phosphoric-sulfuric acid anhydride bond driven by GTP hydrolysis by CysN coupled to ATP hydrolysis by CysD. This Psychromonas ingrahamii (strain DSM 17664 / CCUG 51855 / 37) protein is Sulfate adenylyltransferase subunit 1.